Reading from the N-terminus, the 81-residue chain is Sec-independent protein translocase protein TatA (81 aa).

A helical transmembrane segment spans residues 1-21 (MGGLQPWHWVIVIAVFVLLFG). Positions 46–56 (MQAESKGDEPK) are enriched in basic and acidic residues. The interval 46–81 (MQAESKGDEPKPATPIASERVDTTAPEQQSTDRHTA) is disordered.

This sequence belongs to the TatA/E family. The Tat system comprises two distinct complexes: a TatABC complex, containing multiple copies of TatA, TatB and TatC subunits, and a separate TatA complex, containing only TatA subunits. Substrates initially bind to the TatABC complex, which probably triggers association of the separate TatA complex to form the active translocon.

It localises to the cell membrane. Functionally, part of the twin-arginine translocation (Tat) system that transports large folded proteins containing a characteristic twin-arginine motif in their signal peptide across membranes. TatA could form the protein-conducting channel of the Tat system. The sequence is that of Sec-independent protein translocase protein TatA from Mycolicibacterium smegmatis (strain ATCC 700084 / mc(2)155) (Mycobacterium smegmatis).